A 243-amino-acid chain; its full sequence is Protein HUA2 (243 aa).

It localises to the cytoplasm. Its function is as follows. May have a role in actin patch assembly. This chain is Protein HUA2 (HUA2), found in Saccharomyces cerevisiae (strain ATCC 204508 / S288c) (Baker's yeast).